A 319-amino-acid polypeptide reads, in one-letter code: Acetyl-coenzyme A carboxylase carboxyl transferase subunit alpha (319 aa).

Residues K39–E293 form the CoA carboxyltransferase C-terminal domain.

It belongs to the AccA family. In terms of assembly, acetyl-CoA carboxylase is a heterohexamer composed of biotin carboxyl carrier protein (AccB), biotin carboxylase (AccC) and two subunits each of ACCase subunit alpha (AccA) and ACCase subunit beta (AccD).

The protein localises to the cytoplasm. It catalyses the reaction N(6)-carboxybiotinyl-L-lysyl-[protein] + acetyl-CoA = N(6)-biotinyl-L-lysyl-[protein] + malonyl-CoA. The protein operates within lipid metabolism; malonyl-CoA biosynthesis; malonyl-CoA from acetyl-CoA: step 1/1. Functionally, component of the acetyl coenzyme A carboxylase (ACC) complex. First, biotin carboxylase catalyzes the carboxylation of biotin on its carrier protein (BCCP) and then the CO(2) group is transferred by the carboxyltransferase to acetyl-CoA to form malonyl-CoA. In Geobacter sulfurreducens (strain ATCC 51573 / DSM 12127 / PCA), this protein is Acetyl-coenzyme A carboxylase carboxyl transferase subunit alpha.